A 310-amino-acid chain; its full sequence is 4-hydroxyproline 2-epimerase (310 aa).

Cys88 acts as the Proton acceptor in catalysis. Residues Gly89 to His90, His208, and Asp232 each bind substrate. Cys236 functions as the Proton donor in the catalytic mechanism. Gly237–Thr238 provides a ligand contact to substrate.

This sequence belongs to the proline racemase family.

The catalysed reaction is trans-4-hydroxy-L-proline = cis-4-hydroxy-D-proline. Its function is as follows. Catalyzes the epimerization of trans-4-hydroxy-L-proline (t4LHyp) to cis-4-hydroxy-D-proline (c4DHyp). Is likely involved in a degradation pathway that converts t4LHyp to alpha-ketoglutarate. Can also catalyze the dehydration of trans-3-hydroxy-L-proline (t3LHyp) to Delta(1)-pyrroline-2-carboxylate (Pyr2C), albeit with 42-fold lower efficiency. Displays no proline racemase activity. This chain is 4-hydroxyproline 2-epimerase, found in Burkholderia thailandensis (strain ATCC 700388 / DSM 13276 / CCUG 48851 / CIP 106301 / E264).